The following is a 292-amino-acid chain: Bifunctional protein FolD (292 aa).

NADP(+) contacts are provided by residues 171 to 173, I196, and I237; that span reads GAS.

It belongs to the tetrahydrofolate dehydrogenase/cyclohydrolase family. As to quaternary structure, homodimer.

The enzyme catalyses (6R)-5,10-methylene-5,6,7,8-tetrahydrofolate + NADP(+) = (6R)-5,10-methenyltetrahydrofolate + NADPH. The catalysed reaction is (6R)-5,10-methenyltetrahydrofolate + H2O = (6R)-10-formyltetrahydrofolate + H(+). The protein operates within one-carbon metabolism; tetrahydrofolate interconversion. Its function is as follows. Catalyzes the oxidation of 5,10-methylenetetrahydrofolate to 5,10-methenyltetrahydrofolate and then the hydrolysis of 5,10-methenyltetrahydrofolate to 10-formyltetrahydrofolate. This Helicobacter acinonychis (strain Sheeba) protein is Bifunctional protein FolD.